A 233-amino-acid polypeptide reads, in one-letter code: Fibrillarin-like rRNA/tRNA 2'-O-methyltransferase (233 aa).

Residues 89–90 (TT), 108–109 (EF), 133–134 (DA), and 153–156 (DIAQ) each bind S-adenosyl-L-methionine.

It belongs to the methyltransferase superfamily. Fibrillarin family. Interacts with nop5. Component of box C/D small ribonucleoprotein (sRNP) particles that contain rpl7ae, FlpA and nop5, plus a guide RNA.

Functionally, involved in pre-rRNA and tRNA processing. Utilizes the methyl donor S-adenosyl-L-methionine to catalyze the site-specific 2'-hydroxyl methylation of ribose moieties in rRNA and tRNA. Site specificity is provided by a guide RNA that base pairs with the substrate. Methylation occurs at a characteristic distance from the sequence involved in base pairing with the guide RNA. This Sulfurisphaera tokodaii (strain DSM 16993 / JCM 10545 / NBRC 100140 / 7) (Sulfolobus tokodaii) protein is Fibrillarin-like rRNA/tRNA 2'-O-methyltransferase.